The chain runs to 188 residues: Large ribosomal subunit protein bL32m (188 aa).

Residues Cys-110, Cys-113, Cys-123, and Cys-126 each contribute to the Zn(2+) site. The interval 162-188 is disordered; sequence GETPSEHDQGKRIIERERKRPSWFTQN. The span at 165 to 181 shows a compositional bias: basic and acidic residues; it reads PSEHDQGKRIIERERKR.

The protein belongs to the bacterial ribosomal protein bL32 family. As to quaternary structure, component of the mitochondrial ribosome large subunit (39S) which comprises a 16S rRNA and about 50 distinct proteins. Post-translationally, MRPL32 precursor is processed by the m-AAA protease (composed of AFG3L2 and SPG7), which cleaves the N-terminal transit peptide. Cleavage by the m-AAA protease takes place prior to assembly into the large subunit, an essential step for mitochondrial ribosome (mitoribosome) assembly. Proper processing by the m-AAA protease is dependent on the zinc-binding region within the tightly folded C-terminal domain of MRPL32: zinc-dependent folding halts degradation initiated from the N-terminus and triggers the release of mature MRPL32.

The protein resides in the mitochondrion. Component of the mitochondrial large ribosomal subunit (mt-LSU). The mitochondrial ribosome (mitoribosome) is a large ribonucleoprotein complex responsible for the synthesis of proteins inside mitochondria. This is Large ribosomal subunit protein bL32m (MRPL32) from Bos taurus (Bovine).